We begin with the raw amino-acid sequence, 497 residues long: Squalene monooxygenase (497 aa).

FAD is bound by residues 29-30 (VV), 49-50 (ER), Arg57, Arg159, Val175, Asp336, and Met349. The next 2 helical transmembrane spans lie at 434 to 454 (FLSG…TVAL) and 467 to 487 (LGFL…AKVF).

Belongs to the squalene monooxygenase family. The cofactor is FAD.

It is found in the microsome membrane. The protein resides in the endoplasmic reticulum membrane. It catalyses the reaction squalene + reduced [NADPH--hemoprotein reductase] + O2 = (S)-2,3-epoxysqualene + oxidized [NADPH--hemoprotein reductase] + H2O + H(+). It functions in the pathway terpene metabolism; lanosterol biosynthesis; lanosterol from farnesyl diphosphate: step 2/3. In terms of biological role, catalyzes the stereospecific oxidation of squalene to (S)-2,3-epoxysqualene, and is considered to be a rate-limiting enzyme in steroid biosynthesis. The protein is Squalene monooxygenase (ERG1) of Eremothecium gossypii (strain ATCC 10895 / CBS 109.51 / FGSC 9923 / NRRL Y-1056) (Yeast).